The sequence spans 761 residues: Translational repressor ifet-1 (761 aa).

5 disordered regions span residues 101–274 (SPQR…SSGG), 386–446 (KGME…QHLH), 557–592 (VQRQ…AHNQ), 681–702 (QQAQ…QQHQ), and 730–761 (GSQF…AVPK). Basic and acidic residues-rich tracts occupy residues 114-128 (PTDD…ERLG), 164-189 (RGTR…EERL), and 212-222 (IELRGFDEPKK). Polar residues-rich tracts occupy residues 400 to 410 (QDPSQQAQLLQ), 557 to 568 (VQRQLQKSSSNA), 576 to 592 (SQSP…AHNQ), and 690 to 702 (ERQG…QQHQ).

In terms of assembly, interacts with cgh-1. Interacts with ife-1 and oma-1. As to expression, in the embryo, significantly enriched in the germ cell lineage.

Its subcellular location is the cytoplasm. Functionally, involved in translational repression of multiple mRNAs in the distal gonad. Recruited to the 3' untranslated region (UTR) of zif-1 by oma-1 and is required for translational repression of zif-1. May also be involved in translational repression of mei-1 through recruitment to the mei-1 3' UTR by oma-1. Required for oogenesis but not spermatogenesis, for P granule formation and for the localization of car-1 and cgh-1 to P granules. Required for normal spindle orientation in early embryos. The sequence is that of Translational repressor ifet-1 from Caenorhabditis elegans.